Reading from the N-terminus, the 405-residue chain is L-carnitine CoA-transferase (405 aa).

The CoA site is built by K97 and R104. D169 functions as the Nucleophile in the catalytic mechanism.

Belongs to the CoA-transferase III family. CaiB subfamily. In terms of assembly, homodimer.

The protein resides in the cytoplasm. It catalyses the reaction crotonobetainyl-CoA + (R)-carnitine = crotonobetaine + (R)-carnitinyl-CoA. The enzyme catalyses 4-(trimethylamino)butanoyl-CoA + (R)-carnitine = (R)-carnitinyl-CoA + 4-(trimethylamino)butanoate. It participates in amine and polyamine metabolism; carnitine metabolism. Its function is as follows. Catalyzes the reversible transfer of the CoA moiety from gamma-butyrobetainyl-CoA to L-carnitine to generate L-carnitinyl-CoA and gamma-butyrobetaine. Is also able to catalyze the reversible transfer of the CoA moiety from gamma-butyrobetainyl-CoA or L-carnitinyl-CoA to crotonobetaine to generate crotonobetainyl-CoA. The protein is L-carnitine CoA-transferase of Escherichia coli O127:H6 (strain E2348/69 / EPEC).